The primary structure comprises 508 residues: Lysine--tRNA ligase (508 aa).

2 residues coordinate Mg(2+): glutamate 418 and glutamate 425.

The protein belongs to the class-II aminoacyl-tRNA synthetase family. Homodimer. It depends on Mg(2+) as a cofactor.

It is found in the cytoplasm. The enzyme catalyses tRNA(Lys) + L-lysine + ATP = L-lysyl-tRNA(Lys) + AMP + diphosphate. This is Lysine--tRNA ligase from Burkholderia pseudomallei (strain 668).